The primary structure comprises 314 residues: 4-hydroxy-3-methylbut-2-enyl diphosphate reductase (314 aa).

Position 12 (Cys-12) interacts with [4Fe-4S] cluster. (2E)-4-hydroxy-3-methylbut-2-enyl diphosphate-binding residues include His-41 and His-74. Dimethylallyl diphosphate contacts are provided by His-41 and His-74. Isopentenyl diphosphate is bound by residues His-41 and His-74. Cys-96 serves as a coordination point for [4Fe-4S] cluster. Residue His-124 coordinates (2E)-4-hydroxy-3-methylbut-2-enyl diphosphate. Dimethylallyl diphosphate is bound at residue His-124. His-124 contacts isopentenyl diphosphate. The active-site Proton donor is the Glu-126. Thr-168 provides a ligand contact to (2E)-4-hydroxy-3-methylbut-2-enyl diphosphate. Cys-198 is a binding site for [4Fe-4S] cluster. The (2E)-4-hydroxy-3-methylbut-2-enyl diphosphate site is built by Ser-226, Ser-227, Asn-228, and Ser-270. Dimethylallyl diphosphate is bound by residues Ser-226, Ser-227, Asn-228, and Ser-270. Isopentenyl diphosphate contacts are provided by Ser-226, Ser-227, Asn-228, and Ser-270.

The protein belongs to the IspH family. It depends on [4Fe-4S] cluster as a cofactor.

The enzyme catalyses isopentenyl diphosphate + 2 oxidized [2Fe-2S]-[ferredoxin] + H2O = (2E)-4-hydroxy-3-methylbut-2-enyl diphosphate + 2 reduced [2Fe-2S]-[ferredoxin] + 2 H(+). The catalysed reaction is dimethylallyl diphosphate + 2 oxidized [2Fe-2S]-[ferredoxin] + H2O = (2E)-4-hydroxy-3-methylbut-2-enyl diphosphate + 2 reduced [2Fe-2S]-[ferredoxin] + 2 H(+). The protein operates within isoprenoid biosynthesis; dimethylallyl diphosphate biosynthesis; dimethylallyl diphosphate from (2E)-4-hydroxy-3-methylbutenyl diphosphate: step 1/1. Its pathway is isoprenoid biosynthesis; isopentenyl diphosphate biosynthesis via DXP pathway; isopentenyl diphosphate from 1-deoxy-D-xylulose 5-phosphate: step 6/6. Functionally, catalyzes the conversion of 1-hydroxy-2-methyl-2-(E)-butenyl 4-diphosphate (HMBPP) into a mixture of isopentenyl diphosphate (IPP) and dimethylallyl diphosphate (DMAPP). Acts in the terminal step of the DOXP/MEP pathway for isoprenoid precursor biosynthesis. The chain is 4-hydroxy-3-methylbut-2-enyl diphosphate reductase from Pseudomonas fluorescens (strain Pf0-1).